Consider the following 140-residue polypeptide: ATP synthase epsilon chain (140 aa).

This sequence belongs to the ATPase epsilon chain family. As to quaternary structure, F-type ATPases have 2 components, CF(1) - the catalytic core - and CF(0) - the membrane proton channel. CF(1) has five subunits: alpha(3), beta(3), gamma(1), delta(1), epsilon(1). CF(0) has three main subunits: a, b and c.

It is found in the cell inner membrane. Functionally, produces ATP from ADP in the presence of a proton gradient across the membrane. In Neisseria meningitidis serogroup C / serotype 2a (strain ATCC 700532 / DSM 15464 / FAM18), this protein is ATP synthase epsilon chain.